The chain runs to 55 residues: Large ribosomal subunit protein bL33 (55 aa).

It belongs to the bacterial ribosomal protein bL33 family.

The protein is Large ribosomal subunit protein bL33 of Vibrio cholerae serotype O1 (strain ATCC 39541 / Classical Ogawa 395 / O395).